We begin with the raw amino-acid sequence, 3053 residues long: E3 SUMO-protein ligase RanBP2 (3053 aa).

Position 21 is a phosphoserine (Ser-21). TPR repeat units lie at residues 26 to 59 (SMKGFYFAKLYYEAKEYDLAKKYISTYINVQERD), 60 to 93 (PKAHRFLGLLYEVEENIDKAVECYKRSVELNPTQ), 94 to 128 (KDLVLKIAELLCKNDVTDGRAKYWVERAAKLFPGS), 165 to 201 (IHVNIRLVELYRSNKRLKDAVAHCHEADRNTALRSSL), 288 to 319 (GHFYMHVGSLLLKMGQQSDIQWRALSELAALC), 583 to 616 (QKTGSSLNSFYDQREYIGRSVHYWRKVLPLLKMI), and 648 to 681 (EDAHITFAILDAVNGNIEDAMTAFESIKNVVSYW). The interval 773 to 802 (SELKHSTPSPTKYSLSPSKSYKYSPKTPPR) is disordered. Residues 778-797 (STPSPTKYSLSPSKSYKYSP) show a composition bias toward low complexity. Residue Thr-779 is modified to Phosphothreonine. Phosphoserine occurs at positions 781, 788, and 837. At Arg-944 the chain carries Asymmetric dimethylarginine. A phosphoserine mark is found at Ser-947 and Ser-954. Residues 1000 to 1001 (FG) form repeat 1. Positions 1000 to 3035 (FGKSNFVQPM…DTVRKIESFG (2036 aa)) are 20 X 2 AA repeats of F-G. At Arg-1015 the chain carries Asymmetric dimethylarginine; alternate. Arg-1015 is subject to Omega-N-methylarginine; alternate. At Thr-1096 the chain carries Phosphothreonine. Repeat 2 spans residues 1099–1100 (FG). Ser-1101 carries the post-translational modification Phosphoserine. Residues 1117-1118 (FG) form repeat 3. Thr-1138 is subject to Phosphothreonine. A disordered region spans residues 1147–1171 (SHETDGGSAHGDEEDDGPHFEPVVP). Phosphoserine is present on residues Ser-1154 and Ser-1243. In terms of domain architecture, RanBD1 1 spans 1165 to 1301 (HFEPVVPLPD…FEEAQNILKA (137 aa)). A Glycyl lysine isopeptide (Lys-Gly) (interchain with G-Cter in SUMO2) cross-link involves residue Lys-1344. The RanBP2-type 1 zinc finger occupies 1345-1375 (KEGPYWNCNSCSFKNAATAKKCVSCQNTNPT). At Thr-1407 the chain carries Phosphothreonine. The RanBP2-type 2 zinc finger occupies 1410–1439 (KEGHWDCSVCLVRNEPTVSRCIACQNTKSA). Phosphoserine is present on residues Ser-1438, Ser-1441, and Ser-1446. Residues 1449–1450 (FG) form repeat 4. RanBP2-type zinc fingers lie at residues 1469–1498 (KEGQWECSVCLVRNERSAKKCVACENPGKQ) and 1494–1527 (NPGKQFKEWHCSLCSVKNEAHAIKCVACNNPVTP). The residue at position 1528 (Ser-1528) is a Phosphoserine. Repeat 5 spans residues 1538-1539 (FG). Residue Lys-1557 forms a Glycyl lysine isopeptide (Lys-Gly) (interchain with G-Cter in SUMO1); alternate linkage. Residue Lys-1557 forms a Glycyl lysine isopeptide (Lys-Gly) (interchain with G-Cter in SUMO2); alternate linkage. The RanBP2-type 5 zinc finger occupies 1558–1587 (KEGQWDCSLCFVRNEASATHCIACQYPNKQ). The segment covering 1587–1606 (QNQPTSCVSAPASSETSRSP) has biased composition (polar residues). The disordered stretch occupies residues 1587-1609 (QNQPTSCVSAPASSETSRSPKSG). Residue Lys-1607 forms a Glycyl lysine isopeptide (Lys-Gly) (interchain with G-Cter in SUMO2) linkage. Residue Lys-1616 forms a Glycyl lysine isopeptide (Lys-Gly) (interchain with G-Cter in SUMO1); alternate linkage. Lys-1616 participates in a covalent cross-link: Glycyl lysine isopeptide (Lys-Gly) (interchain with G-Cter in SUMO2); alternate. A RanBP2-type 6 zinc finger spans residues 1617 to 1646 (KEGEWECAVCSVQNESSSLKCVACEASKPT). A disordered region spans residues 1648–1675 (KPHEAPSAFTVGSKSQSNESAGSQVGTE). Residues 1657–1675 (TVGSKSQSNESAGSQVGTE) are compositionally biased toward polar residues. A Phosphoserine modification is found at Ser-1670. Repeat unit 6 spans residues 1696–1697 (FG). Position 1706 is a phosphoserine (Ser-1706). Copy 7 of the repeat occupies 1737 to 1738 (FG). The segment covering 1744 to 1755 (NQEKKSEKHLEN) has biased composition (basic and acidic residues). Positions 1744-1772 (NQEKKSEKHLENDPSFQAHDTSGQKNGSG) are disordered. Over residues 1757-1772 (PSFQAHDTSGQKNGSG) the composition is skewed to polar residues. A run of 2 repeats spans residues 1775 to 1776 (FG) and 1798 to 1799 (FG). Position 1814 is an N6-acetyllysine (Lys-1814). A compositionally biased stretch (polar residues) spans 1819–1831 (QSGKVAEKANTSS). Residues 1819 to 1846 (QSGKVAEKANTSSDLEKDDDAYKTEDSD) are disordered. The residue at position 1842 (Thr-1842) is a Phosphothreonine. A Phosphoserine modification is found at Ser-1845. The RanBD1 2 domain occupies 1849–1985 (HFEPVVQMPE…FEECQRLLLD (137 aa)). Lys-1859 participates in a covalent cross-link: Glycyl lysine isopeptide (Lys-Gly) (interchain with G-Cter in SUMO2). Residues 1984-2124 (LDIPLQTPHK…SKSPAKLNQS (141 aa)) form an interaction with BICD2 region. Phosphothreonine is present on Thr-1990. The tract at residues 2030–2060 (DEENASSGADAPSASDTTAKQNPDNTGPALE) is disordered. Residues 2034-2048 (ASSGADAPSASDTTA) are compositionally biased toward low complexity. 2 positions are modified to phosphoserine: Ser-2083 and Ser-2088. The stretch at 2097 to 2098 (FG) is repeat 10. 3 positions are modified to phosphoserine: Ser-2107, Ser-2117, and Ser-2127. A compositionally biased stretch (low complexity) spans 2111-2121 (ALSPSKSPAKL). The tract at residues 2111–2144 (ALSPSKSPAKLNQSGASVGTDEESDVTQEEERDG) is disordered. Thr-2130 is modified (phosphothreonine). Acidic residues predominate over residues 2130-2142 (TDEESDVTQEEER). A Phosphoserine modification is found at Ser-2134. Residues 2146 to 2282 (YFEPVVPLPD…FDEAKTAQEK (137 aa)) enclose the RanBD1 3 domain. 3 positions are modified to phosphoserine: Ser-2299, Ser-2330, and Ser-2348. A disordered region spans residues 2316–2348 (RTDLTQGDEVIDTTSEAGETSSTSETTPKAVVS). The segment covering 2328–2342 (TTSEAGETSSTSETT) has biased composition (low complexity). Residues 2354–2355 (FG) form repeat 11. A Glycyl lysine isopeptide (Lys-Gly) (interchain with G-Cter in SUMO2) cross-link involves residue Lys-2360. Position 2364 is a phosphoserine (Ser-2364). Tandem repeats lie at residues 2373 to 2374 (FG) and 2383 to 2384 (FG). Over residues 2394-2406 (SNSEMTSRVQSGS) the composition is skewed to polar residues. Residues 2394 to 2430 (SNSEMTSRVQSGSEGKVKPDKCELPQNSDIKQSSDGK) are disordered. Lys-2430 is covalently cross-linked (Glycyl lysine isopeptide (Lys-Gly) (interchain with G-Cter in SUMO)). Lys-2432 is covalently cross-linked (Glycyl lysine isopeptide (Lys-Gly) (interchain with G-Cter in SUMO1); alternate). Residue Lys-2432 forms a Glycyl lysine isopeptide (Lys-Gly) (interchain with G-Cter in SUMO2); alternate linkage. A disordered region spans residues 2443–2463 (STSYTFKTPEKAQEKSKPEDL). Residue Lys-2449 forms a Glycyl lysine isopeptide (Lys-Gly) (interchain with G-Cter in SUMO2) linkage. Residue Thr-2450 is modified to Phosphothreonine. The segment covering 2450–2462 (TPEKAQEKSKPED) has biased composition (basic and acidic residues). The tract at residues 2468–2472 (DILIV) is interaction with sumoylated RANGAP1. A run of 2 repeats spans residues 2470 to 2522 (LIVY…KKLN) and 2546 to 2596 (VIVW…RKVC). The tract at residues 2470–2522 (LIVYELTPTPEQKALAEKLLLPSTFFCYKNRPGYVSEEEEDDEDYEMAVKKLN) is interaction with UBE2I. The required for E3 SUMO-ligase activity stretch occupies residues 2470–2545 (LIVYELTPTP…ENLADNDKEC (76 aa)). Positions 2470-2596 (LIVYELTPTP…DFQSELRKVC (127 aa)) are 2 X 50 AA approximate repeats. At Tyr-2503 the chain carries Phosphotyrosine. Residues Ser-2505 and Ser-2576 each carry the phosphoserine modification. Residues 2523–2596 (GKLYLDDSEK…DFQSELRKVC (74 aa)) are interaction with SUMO1. Thr-2578 carries the post-translational modification Phosphothreonine. 2 stretches are compositionally biased toward basic and acidic residues: residues 2598–2617 (AQKSQNEKVTDRVGIEHIGE) and 2627–2637 (KSEEPDSDTKH). A disordered region spans residues 2598-2666 (AQKSQNEKVT…KETDMEFPSK (69 aa)). Residue Lys-2627 forms a Glycyl lysine isopeptide (Lys-Gly) (interchain with G-Cter in SUMO2) linkage. Ser-2640 carries the post-translational modification Phosphoserine. A Glycyl lysine isopeptide (Lys-Gly) (interchain with G-Cter in SUMO2) cross-link involves residue Lys-2649. Over residues 2649 to 2666 (KPVDLSTRKETDMEFPSK) the composition is skewed to basic and acidic residues. 4 consecutive repeat copies span residues 2674–2675 (FG), 2676–2677 (FG), 2697–2698 (FG), and 2714–2715 (FG). The residue at position 2729 (Ser-2729) is a Phosphoserine. The RanBD1 4 domain maps to 2740–2875 (HFEPIVSLPE…FEECQQNIIK (136 aa)). In terms of domain architecture, PPIase cyclophilin-type spans 2896–3052 (FFDVCADGEP…RRICITECGQ (157 aa)). Repeat copies occupy residues 2935–2936 (FG), 3018–3019 (FG), and 3034–3035 (FG). A Phosphoserine modification is found at Ser-3036.

This sequence belongs to the RanBP2 E3 ligase family. In terms of assembly, part of the nuclear pore complex. Forms a complex with NXT1, NXF1 and RANGAP1. Forms a tight complex with RANBP1 and UBE2I. Interacts with SUMO1 but not SUMO2. Interacts with sumoylated RANGAP1. Interacts with CDCA8. Interacts with PML. Interacts with BICD2. Interacts with PRKN. Interacts with MCM3AP. Interacts with COX11. Interacts with synaptic plasticity regulator PANTS. Polyubiquitinated by PRKN, which leads to proteasomal degradation. Post-translationally, the inner channel of the NPC has a different redox environment from the cytoplasm and allows the formation of interchain disulfide bonds between some nucleoporins, the significant increase of these linkages upon oxidative stress reduces the permeability of the NPC.

The protein localises to the nucleus. Its subcellular location is the nucleus membrane. The protein resides in the nuclear pore complex. It localises to the nucleus envelope. It functions in the pathway protein modification; protein sumoylation. In terms of biological role, E3 SUMO-protein ligase which facilitates SUMO1 and SUMO2 conjugation by UBE2I. Involved in transport factor (Ran-GTP, karyopherin)-mediated protein import via the F-G repeat-containing domain which acts as a docking site for substrates. Binds single-stranded RNA (in vitro). May bind DNA. Component of the nuclear export pathway. Specific docking site for the nuclear export factor exportin-1. Inhibits EIF4E-dependent mRNA export. Sumoylates PML at 'Lys-490' which is essential for the proper assembly of PML-NB. Recruits BICD2 to the nuclear envelope and cytoplasmic stacks of nuclear pore complex known as annulate lamellae during G2 phase of cell cycle. Probable inactive PPIase with no peptidyl-prolyl cis-trans isomerase activity. This is E3 SUMO-protein ligase RanBP2 (Ranbp2) from Mus musculus (Mouse).